The primary structure comprises 242 residues: ATP synthase subunit a (242 aa).

The next 6 helical transmembrane spans lie at 29–49 (SSIY…LAFY), 84–104 (FIPL…LGMT), 114–134 (IIVT…VGFV), 140–160 (FLTL…IIVI), 181–201 (MAGH…MIYL), and 203–223 (FLPI…AILQ).

Belongs to the ATPase A chain family. In terms of assembly, F-type ATPases have 2 components, CF(1) - the catalytic core - and CF(0) - the membrane proton channel. CF(1) has five subunits: alpha(3), beta(3), gamma(1), delta(1), epsilon(1). CF(0) has three main subunits: a(1), b(2) and c(9-12). The alpha and beta chains form an alternating ring which encloses part of the gamma chain. CF(1) is attached to CF(0) by a central stalk formed by the gamma and epsilon chains, while a peripheral stalk is formed by the delta and b chains.

It localises to the cell inner membrane. Key component of the proton channel; it plays a direct role in the translocation of protons across the membrane. The chain is ATP synthase subunit a from Rickettsia peacockii (strain Rustic).